A 585-amino-acid chain; its full sequence is Zinc finger protein Eos (585 aa).

2 disordered regions span residues Met-1–Leu-43 and Glu-68–Ser-98. Residues Gln-25–Pro-34 are compositionally biased toward basic and acidic residues. The span at Ser-79–Ser-98 shows a compositional bias: polar residues. Lys-100 is covalently cross-linked (Glycyl lysine isopeptide (Lys-Gly) (interchain with G-Cter in SUMO2)). Ser-105 carries the post-translational modification Phosphoserine. 4 consecutive C2H2-type zinc fingers follow at residues Leu-159–His-181, Phe-187–His-209, Phe-215–His-237, and Tyr-248–His-271. The tract at residues Ala-281–Gly-585 is interaction with FOXP3. N6-acetyllysine is present on Lys-335. Residues Pro-410 to Arg-489 form a disordered region. The short motif at Pro-425–Ala-429 is the CTBP-binding motif PEDLA element. Over residues Gln-475–Thr-484 the composition is skewed to pro residues. Lys-500 participates in a covalent cross-link: Glycyl lysine isopeptide (Lys-Gly) (interchain with G-Cter in SUMO2). 2 C2H2-type zinc fingers span residues Phe-530–His-552 and Phe-558–His-582.

It belongs to the Ikaros C2H2-type zinc-finger protein family. In terms of assembly, self-associates. Interacts with other family members; IKZF1, IKZF2, IKZF3 and IKZF5. Interacts with CTBP2. Interacts with SPI1, MITF, FOXP3 and CTBP1. As to expression, highly expressed in skeletal muscle, low levels of expression in heart, thymus, kidney, liver, and spleen. Expressed in the hematopoietic cell lines MOLT-4, NALM-6 and K-562. Highly expressed in THP-1 and M-07e cell lines, which have characteristics of myeloid and early megakaryocytic cells respectively.

The protein resides in the nucleus. Functionally, DNA-binding protein that binds to the 5'GGGAATRCC-3' Ikaros-binding sequence. Transcriptional repressor. Interacts with SPI1 and MITF to repress transcription of the CTSK and ACP5 promoters via recruitment of corepressors SIN3A and CTBP2. May be involved in the development of central and peripheral nervous systems. Essential for the inhibitory function of regulatory T-cells (Treg). Mediates FOXP3-mediated gene silencing in regulatory T-cells (Treg) via recruitment of corepressor CTBP1. The polypeptide is Zinc finger protein Eos (IKZF4) (Homo sapiens (Human)).